A 203-amino-acid polypeptide reads, in one-letter code: Probable host range protein 2-3 (203 aa).

The segment at 182-203 (LEEEDEEKIADTGNDNQKDAED) is disordered.

This sequence belongs to the poxviridae C7 protein family.

Its function is as follows. Plays a role for multiplication of the virus in different cell types. This is Probable host range protein 2-3 from Myxoma virus (strain Lausanne) (MYXV).